A 1943-amino-acid polypeptide reads, in one-letter code: Trichohyalin (1943 aa).

The segment at 1–91 (MSPLLRSICD…AQACYYALGQ (91 aa)) is S-100-like. 2 consecutive EF-hand domains span residues 23–48 (CDGA…LRRP) and 49–84 (HDPK…VAQA). Asp-32, Asp-62, Asp-64, Asn-66, Arg-68, and Glu-73 together coordinate Ca(2+). 3 disordered regions span residues 110 to 164 (LQDR…LEQR), 186 to 209 (RRAE…DEEQ), and 222 to 274 (GREE…LQEE). A compositionally biased stretch (basic and acidic residues) spans 197–209 (KGHETEEFPDEEQ). A 1-1; approximate repeat occupies 314 to 326 (RREQQEERREQQE). A 5 X 13 AA tandem repeats of R-R-E-Q-E-E-E-R-R-E-Q-Q-L region spans residues 314–377 (RREQQEERRE…QEEERREQQL (64 aa)). One copy of the 1-2; approximate repeat lies at 327–339 (RREQQEERREQQL). Residues 340–351 (RREQEERREQQL) form a 1-3; approximate repeat. 10 consecutive repeat copies span residues 352 to 364 (RREQ…EQQL), 365 to 377 (RREQ…EQQL), 378 to 383 (RREQQL), 384 to 389 (RREQQL), 390 to 395 (RREQQL), 396 to 401 (RREQQL), 402 to 407 (RREQQL), 408 to 413 (RREQQL), 414 to 419 (RREQQL), and 420 to 425 (RREQQL). The interval 378 to 425 (RREQQLRREQQLRREQQLRREQQLRREQQLRREQQLRREQQLRREQQL) is 8 X 6 AA tandem repeats of R-R-E-Q-Q-L. Residues 425–683 (LRREQEEERH…REHEEERREQ (259 aa)) form a 9 X 28 AA approximate tandem repeats region. 4 disordered regions span residues 426-485 (RREQ…EERR), 509-546 (REQE…EERR), 608-819 (ERLE…EKEQ), and 837-872 (EEQL…RRDQ). Composition is skewed to basic and acidic residues over residues 608–684 (ERLE…REQE), 724–781 (RKQE…ERGR), 789–812 (PLRE…RFLP), and 859–872 (DQER…RRDQ). A run of 10 repeats spans residues 906-935 (LQEE…EEEQ), 936-965 (LQQE…KDKK), 966-995 (LQQK…EEEE), 996-1025 (LQQE…KKDE), 1026-1055 (LQQE…EEEE), 1056-1085 (LQQE…KEEE), 1086-1115 (LQQE…EEEE), 1116-1145 (LQQE…EEEE), 1146-1175 (VQQE…EEEE), and 1176-1204 (LQQE…EEEE). Residues 906–1204 (LQEEEEELQR…RERQYREEEE (299 aa)) are 10 X 30 AA tandem repeats. A compositionally biased stretch (basic and acidic residues) spans 950-992 (KRRRQERERQYRKDKKLQQKEEQLLGEEPEKRRRQEREKKYRE). 9 disordered regions span residues 950–1000 (KRRR…QQEE), 1046–1120 (RERQ…QQEE), 1137–1162 (ERQY…EKRR), 1193–1371 (QERE…RHQE), 1404–1435 (REQQ…FREE), 1492–1691 (QQLR…ERDR), 1757–1820 (PERE…RDGK), 1834–1864 (EQRL…EQEL), and 1876–1928 (RERK…VRSS). Positions 1052–1064 (EEEELQQEEEQLL) are enriched in acidic residues. Composition is skewed to basic and acidic residues over residues 1065–1085 (GEER…KEEE) and 1092–1111 (QLLR…RQCR). The span at 1142–1151 (EEEEVQQEEE) shows a compositional bias: acidic residues. Residues 1152 to 1162 (QLLREEPEKRR) show a composition bias toward basic and acidic residues. 2 stretches are compositionally biased toward basic and acidic residues: residues 1214 to 1263 (YRDE…DRQS) and 1274 to 1371 (QQER…RHQE). The tract at residues 1292–1894 (HFPEEEQLER…IRRQQKEEQR (603 aa)) is 23 X 26 AA approximate tandem repeats. Basic and acidic residues-rich tracts occupy residues 1492–1524 (QQLR…EQQL), 1533–1673 (FLQE…REEE), and 1682–1691 (QQLRRQERDR). Residues 1876–1912 (RERKLREEHIRRQQKEEQRHRQVGEIKSQEGKGHGRL) show a composition bias toward basic and acidic residues.

This sequence belongs to the S100-fused protein family. In terms of assembly, monomer. In terms of processing, substrate of transglutaminase. Some 200 arginines are probably converted to citrullines by peptidylarginine deimidase. In terms of tissue distribution, found in the hard keratinizing tissues such as the inner root sheath (IRS) of hair follicles and medulla, and in the filiform papillae of dorsal tongue epithelium.

Intermediate filament-associated protein that associates in regular arrays with keratin intermediate filaments (KIF) of the inner root sheath cells of the hair follicle and the granular layer of the epidermis. It later becomes cross-linked to KIF by isodipeptide bonds. It may serve as scaffold protein, together with involucrin, in the organization of the cell envelope or even anchor the cell envelope to the KIF network. It may be involved in its own calcium-dependent postsynthetic processing during terminal differentiation. The polypeptide is Trichohyalin (TCHH) (Homo sapiens (Human)).